Consider the following 94-residue polypeptide: ATP synthase F(0) complex subunit f, mitochondrial (94 aa).

Position 2 is an N-acetylalanine (alanine 2). Serine 3 is modified (phosphoserine). An N6-acetyllysine modification is found at lysine 22. The chain crosses the membrane as a helical span at residues 68-85; that stretch reads MVLACYVLFSYSFSYKHL.

It belongs to the ATPase F chain family. As to quaternary structure, component of the ATP synthase complex composed at least of ATP5F1A/subunit alpha, ATP5F1B/subunit beta, ATP5MC1/subunit c (homooctomer), MT-ATP6/subunit a, MT-ATP8/subunit 8, ATP5ME/subunit e, ATP5MF/subunit f, ATP5MG/subunit g, ATP5MK/subunit k, ATP5MJ/subunit j, ATP5F1C/subunit gamma, ATP5F1D/subunit delta, ATP5F1E/subunit epsilon, ATP5PF/subunit F6, ATP5PB/subunit b, ATP5PD/subunit d, ATP5PO/subunit OSCP. ATP synthase complex consists of a soluble F(1) head domain (subunits alpha(3) and beta(3)) - the catalytic core - and a membrane F(0) domain - the membrane proton channel (subunits c, a, 8, e, f, g, k and j). These two domains are linked by a central stalk (subunits gamma, delta, and epsilon) rotating inside the F1 region and a stationary peripheral stalk (subunits F6, b, d, and OSCP).

The protein resides in the mitochondrion. The protein localises to the mitochondrion inner membrane. In terms of biological role, subunit f, of the mitochondrial membrane ATP synthase complex (F(1)F(0) ATP synthase or Complex V) that produces ATP from ADP in the presence of a proton gradient across the membrane which is generated by electron transport complexes of the respiratory chain. ATP synthase complex consist of a soluble F(1) head domain - the catalytic core - and a membrane F(1) domain - the membrane proton channel. These two domains are linked by a central stalk rotating inside the F(1) region and a stationary peripheral stalk. During catalysis, ATP synthesis in the catalytic domain of F(1) is coupled via a rotary mechanism of the central stalk subunits to proton translocation. In vivo, can only synthesize ATP although its ATP hydrolase activity can be activated artificially in vitro. Part of the complex F(0) domain. This is ATP synthase F(0) complex subunit f, mitochondrial from Pongo abelii (Sumatran orangutan).